Reading from the N-terminus, the 157-residue chain is Cyclic pyranopterin monophosphate synthase (157 aa).

Residues 74-76 (MCH) and 112-113 (ME) contribute to the substrate site. The active site involves Asp127.

This sequence belongs to the MoaC family. As to quaternary structure, homohexamer; trimer of dimers.

It catalyses the reaction (8S)-3',8-cyclo-7,8-dihydroguanosine 5'-triphosphate = cyclic pyranopterin phosphate + diphosphate. Its pathway is cofactor biosynthesis; molybdopterin biosynthesis. Its function is as follows. Catalyzes the conversion of (8S)-3',8-cyclo-7,8-dihydroguanosine 5'-triphosphate to cyclic pyranopterin monophosphate (cPMP). This is Cyclic pyranopterin monophosphate synthase from Campylobacter jejuni (strain RM1221).